A 245-amino-acid chain; its full sequence is Biosynthetic peptidoglycan transglycosylase (245 aa).

The helical transmembrane segment at Ile-19–Val-39 threads the bilayer.

This sequence belongs to the glycosyltransferase 51 family.

It is found in the cell inner membrane. It catalyses the reaction [GlcNAc-(1-&gt;4)-Mur2Ac(oyl-L-Ala-gamma-D-Glu-L-Lys-D-Ala-D-Ala)](n)-di-trans,octa-cis-undecaprenyl diphosphate + beta-D-GlcNAc-(1-&gt;4)-Mur2Ac(oyl-L-Ala-gamma-D-Glu-L-Lys-D-Ala-D-Ala)-di-trans,octa-cis-undecaprenyl diphosphate = [GlcNAc-(1-&gt;4)-Mur2Ac(oyl-L-Ala-gamma-D-Glu-L-Lys-D-Ala-D-Ala)](n+1)-di-trans,octa-cis-undecaprenyl diphosphate + di-trans,octa-cis-undecaprenyl diphosphate + H(+). Its pathway is cell wall biogenesis; peptidoglycan biosynthesis. In terms of biological role, peptidoglycan polymerase that catalyzes glycan chain elongation from lipid-linked precursors. The protein is Biosynthetic peptidoglycan transglycosylase of Burkholderia multivorans (strain ATCC 17616 / 249).